Here is a 376-residue protein sequence, read N- to C-terminus: Succinate--CoA ligase [ADP-forming] subunit beta (376 aa).

Positions 9 to 234 (KAIAKKYGIP…ERELSELEKE (226 aa)) constitute an ATP-grasp domain. Residues K45, 52–54 (GRG), E91, E94, and E99 each bind ATP. 2 residues coordinate Mg(2+): N191 and D204. Substrate contacts are provided by residues N254 and 311–313 (GIT).

It belongs to the succinate/malate CoA ligase beta subunit family. As to quaternary structure, heterotetramer of two alpha and two beta subunits. Mg(2+) is required as a cofactor.

It catalyses the reaction succinate + ATP + CoA = succinyl-CoA + ADP + phosphate. The catalysed reaction is GTP + succinate + CoA = succinyl-CoA + GDP + phosphate. It participates in carbohydrate metabolism; tricarboxylic acid cycle; succinate from succinyl-CoA (ligase route): step 1/1. Functionally, succinyl-CoA synthetase functions in the citric acid cycle (TCA), coupling the hydrolysis of succinyl-CoA to the synthesis of either ATP or GTP and thus represents the only step of substrate-level phosphorylation in the TCA. The beta subunit provides nucleotide specificity of the enzyme and binds the substrate succinate, while the binding sites for coenzyme A and phosphate are found in the alpha subunit. The polypeptide is Succinate--CoA ligase [ADP-forming] subunit beta (Ignicoccus hospitalis (strain KIN4/I / DSM 18386 / JCM 14125)).